Consider the following 350-residue polypeptide: WD repeat-containing protein DWA2 (350 aa).

6 WD repeats span residues 39-79, 118-158, 166-205, 206-246, 250-290, and 311-350; these read KEEN…FDQR, AHVG…KSAE, GMRH…KNNS, IERA…FPVQ, GHTH…EHKT, and DYED…LPRR.

As to quaternary structure, interacts with ABI5 and DDB1A and DWA1.

It localises to the nucleus. Its pathway is protein modification; protein ubiquitination. In terms of biological role, component of the CUL4-RBX1-DDB1-DWA1/DWA2 E3 ubiquitin-protein ligase complex that acts as a negative regulator in abscisic acid (ABA) signaling. May function as the substrate recognition module within this complex leading to ABI5 degradation. Functionally redundant with DWA1. The protein is WD repeat-containing protein DWA2 (DWA2) of Arabidopsis thaliana (Mouse-ear cress).